The primary structure comprises 299 residues: tRNA pseudouridine synthase B (299 aa).

Asp47 (nucleophile) is an active-site residue.

The protein belongs to the pseudouridine synthase TruB family. Type 1 subfamily.

The catalysed reaction is uridine(55) in tRNA = pseudouridine(55) in tRNA. In terms of biological role, responsible for synthesis of pseudouridine from uracil-55 in the psi GC loop of transfer RNAs. In Dechloromonas aromatica (strain RCB), this protein is tRNA pseudouridine synthase B.